We begin with the raw amino-acid sequence, 622 residues long: MALLQISEPGMAPAPHQRRLAVGIDLGTTNSLVAAVRNSIPEALPDDAGRVLLPSVVRYLDKGGRRIGHAAKEEAAIDPRNTIVSVKRFMGRGKAEVEGAANAPYEFVDAPGMVQIRTVDGVKSPVEVSAEILATLRQRAEDTLGDDLVGAVITVPAYFDDAQRQATKDAARLAGLNVLRLLNEPTAAAIAYGLDNGAEGLYAVYDLGGGTFDLSILKLTKGVFEVLAAGGDSALGGDDFDHLLFEHVLAQAGLEAAALAPEDVRLLLDRVRGAKEALSAAPQARVDVKLSTGEKLAQTITRDTFAALVEPLVQRTLGPTRKALRDAQVSAADIKGVVLVGGATRMPVIRDAVAKYFGQPPLVNLDPDQVVALGAAIQADLLAGNRSGGDDWLLLDVIPLSLGVETMGGLVEKIIPRNSTIPVARAQEFTTFKDGQTAMAIHVVQGERELVSDCRSLARFELRGIPPMTAGAARIRVTYQVDADGLLSVFAREQHSGVEASVVVKPSYGLGDDDIARMLEDSFKTAEVDMRARALREAQVEAQRLVEATEAALVADGDLLDASERATVDALVVSLRALAPGDDADAIDAATKALAEGTDEFAARRMDKSIKRALAGRKLDEI.

It belongs to the heat shock protein 70 family.

Its function is as follows. Chaperone involved in the maturation of iron-sulfur cluster-containing proteins. Has a low intrinsic ATPase activity which is markedly stimulated by HscB. This is Chaperone protein HscA homolog from Burkholderia pseudomallei (strain 1710b).